A 98-amino-acid polypeptide reads, in one-letter code: Class II hydrophobin 3 (98 aa).

The N-terminal stretch at 1 to 18 (MQFTTTTLIAILSALAVA) is a signal peptide. Residues Asn-26 and Asn-54 are each glycosylated (N-linked (GlcNAc...) asparagine). 4 disulfides stabilise this stretch: Cys-35/Cys-83, Cys-44/Cys-74, Cys-45/Cys-57, and Cys-84/Cys-95.

Belongs to the cerato-ulmin hydrophobin family.

The protein resides in the secreted. It is found in the cell wall. Functionally, aerial growth, conidiation, and dispersal of filamentous fungi in the environment rely upon a capability of their secreting small amphipathic proteins called hydrophobins (HPBs) with low sequence identity. Class I can self-assemble into an outermost layer of rodlet bundles on aerial cell surfaces, conferring cellular hydrophobicity that supports fungal growth, development and dispersal; whereas Class II form highly ordered films at water-air interfaces through intermolecular interactions but contribute nothing to the rodlet structure. In Botryotinia fuckeliana, hydrophobins are not involved in conferring surface hydrophobicity to conidia and aerial hyphae and their function in sclerotia and fruiting bodies remains to be investigated. The sequence is that of Class II hydrophobin 3 from Botryotinia fuckeliana (strain B05.10) (Noble rot fungus).